Here is a 276-residue protein sequence, read N- to C-terminus: MSKVPAALNPTEEDISLLLAAQTHIGTKNADKQMAPYIYKRRADGIHLLNIGKTWEKIVFAARILAAIENPADICVISGRQYGHRAVLKFAAQTGATAIAGRFTPGSFTNYITRSFKEPRVIVVTDPRVDHQAIREASYVNIPCISFVDSDSPLKFVDVAIPGNVRGRHSVGLLWWLLCRTVLRIKGGDLSVMPDMFFYRDPEEVEREAQEAAAAAQAAKETAEPTTEGAADVQADVPLAVAANLATETGNVDWSAEGAQDWAADGAAEQATSSWE.

Disordered regions lie at residues 209–233 (AQEA…AADV) and 252–276 (VDWS…SSWE). Positions 211–231 (EAAAAAQAAKETAEPTTEGAA) are enriched in low complexity.

The protein belongs to the universal ribosomal protein uS2 family. Component of the small ribosomal subunit. Mature ribosomes consist of a small (40S) and a large (60S) subunit. The 40S subunit contains about 33 different proteins and 1 molecule of RNA (18S). The 60S subunit contains about 49 different proteins and 3 molecules of RNA (25S, 5.8S and 5S). Interacts with RPS21.

The protein localises to the cytoplasm. Functionally, required for the assembly and/or stability of the 40S ribosomal subunit. Required for the processing of the 20S rRNA-precursor to mature 18S rRNA in a late step of the maturation of 40S ribosomal subunits. In Mycosarcoma maydis (Corn smut fungus), this protein is Small ribosomal subunit protein uS2.